The sequence spans 65 residues: MAIVPKRKTSKQRKHKRQSHSALKLPNLVSCSNCANKKLPHHICQFCGFYKNRKIISFKAVNDKN.

Over residues 1 to 19 (MAIVPKRKTSKQRKHKRQS) the composition is skewed to basic residues. Residues 1 to 21 (MAIVPKRKTSKQRKHKRQSHS) form a disordered region.

Belongs to the bacterial ribosomal protein bL32 family.

This is Large ribosomal subunit protein bL32 from Mesomycoplasma hyopneumoniae (strain 7448) (Mycoplasma hyopneumoniae).